We begin with the raw amino-acid sequence, 260 residues long: Hydroxyethylthiazole kinase (260 aa).

Residue Met38 coordinates substrate. ATP contacts are provided by Arg114 and Thr159. Gly186 serves as a coordination point for substrate.

The protein belongs to the Thz kinase family. The cofactor is Mg(2+).

It carries out the reaction 5-(2-hydroxyethyl)-4-methylthiazole + ATP = 4-methyl-5-(2-phosphooxyethyl)-thiazole + ADP + H(+). The protein operates within cofactor biosynthesis; thiamine diphosphate biosynthesis; 4-methyl-5-(2-phosphoethyl)-thiazole from 5-(2-hydroxyethyl)-4-methylthiazole: step 1/1. Catalyzes the phosphorylation of the hydroxyl group of 4-methyl-5-beta-hydroxyethylthiazole (THZ). In Helicobacter pylori (strain G27), this protein is Hydroxyethylthiazole kinase.